The following is a 417-amino-acid chain: Serine hydroxymethyltransferase (417 aa).

(6S)-5,6,7,8-tetrahydrofolate contacts are provided by residues Leu-119 and 123–125 (GHL). Lys-227 carries the N6-(pyridoxal phosphate)lysine modification.

The protein belongs to the SHMT family. In terms of assembly, homodimer. Requires pyridoxal 5'-phosphate as cofactor.

It is found in the cytoplasm. The enzyme catalyses (6R)-5,10-methylene-5,6,7,8-tetrahydrofolate + glycine + H2O = (6S)-5,6,7,8-tetrahydrofolate + L-serine. It functions in the pathway one-carbon metabolism; tetrahydrofolate interconversion. It participates in amino-acid biosynthesis; glycine biosynthesis; glycine from L-serine: step 1/1. Functionally, catalyzes the reversible interconversion of serine and glycine with tetrahydrofolate (THF) serving as the one-carbon carrier. This reaction serves as the major source of one-carbon groups required for the biosynthesis of purines, thymidylate, methionine, and other important biomolecules. Also exhibits THF-independent aldolase activity toward beta-hydroxyamino acids, producing glycine and aldehydes, via a retro-aldol mechanism. The protein is Serine hydroxymethyltransferase of Buchnera aphidicola subsp. Cinara cedri (strain Cc).